We begin with the raw amino-acid sequence, 429 residues long: Glucose-6-phosphate exchanger SLC37A4 (429 aa).

Helical transmembrane passes span 84 to 104, 105 to 125, 139 to 159, 167 to 187, 219 to 239, 260 to 280, 302 to 322, 329 to 349, 368 to 388, and 394 to 414; these read LLLV…PVFA, ALWF…GKVL, AILS…ATIL, STLA…LLLI, ELLL…VFGV, LVGS…SIAA, GLLL…RVTV, LWIL…IALF, IVGL…STIA, and STAF…FFLL.

It belongs to the major facilitator superfamily. Organophosphate:Pi antiporter (OPA) (TC 2.A.1.4) family. Mostly expressed in liver and kidney.

Its subcellular location is the endoplasmic reticulum membrane. The enzyme catalyses D-glucose 6-phosphate(in) + phosphate(out) = D-glucose 6-phosphate(out) + phosphate(in). Its activity is regulated as follows. Inhibited by vanadate and chlorogenic acid. In terms of biological role, inorganic phosphate and glucose-6-phosphate antiporter of the endoplasmic reticulum. Transports cytoplasmic glucose-6-phosphate into the lumen of the endoplasmic reticulum and translocates inorganic phosphate into the opposite direction. Forms with glucose-6-phosphatase the complex responsible for glucose production through glycogenolysis and gluconeogenesis. Hence, it plays a central role in homeostatic regulation of blood glucose levels. This chain is Glucose-6-phosphate exchanger SLC37A4, found in Homo sapiens (Human).